Here is a 207-residue protein sequence, read N- to C-terminus: Probable GTP-binding protein EngB (207 aa).

Positions 23-203 (GAPEVCFVGR…GAHIENWISP (181 aa)) constitute an EngB-type G domain. GTP contacts are provided by residues 31 to 38 (GRSNAGKS), 58 to 62 (GRTRL), 83 to 86 (DLPG), 150 to 153 (TKAD), and 182 to 184 (FSS). Mg(2+) contacts are provided by Ser38 and Thr60.

It belongs to the TRAFAC class TrmE-Era-EngA-EngB-Septin-like GTPase superfamily. EngB GTPase family. Mg(2+) is required as a cofactor.

In terms of biological role, necessary for normal cell division and for the maintenance of normal septation. The sequence is that of Probable GTP-binding protein EngB from Bordetella bronchiseptica (strain ATCC BAA-588 / NCTC 13252 / RB50) (Alcaligenes bronchisepticus).